We begin with the raw amino-acid sequence, 216 residues long: Golgi to ER traffic protein 1 (216 aa).

The Lumenal portion of the chain corresponds to 1 to 9 (MFDISSSNL). A helical membrane pass occupies residues 10–29 (LISVLVVLFAKQLINAVGKA). Topologically, residues 30 to 116 (TLENIGWSAY…YISKYIGYMI (87 aa)) are cytoplasmic. The stretch at 54–105 (LDQKNVELAKVSKERKSISAQDQYARWTKLNRQFDKLTGEINKLKEETSASR) forms a coiled coil. The chain crosses the membrane as a helical span at residues 117–137 (LVTTTLPIWFFRVWFRKAVLF). Topologically, residues 138 to 161 (YFPTGVLPHYLEWFLALPFITTGG) are lumenal. A helical membrane pass occupies residues 162–178 (VGLTIWMSAVNNVVSSV). At 179 to 216 (IFLVKFPFEKEVPFPSKEVGNEKTSINKEEVSGTPAAN) the chain is on the cytoplasmic side. The segment at 193 to 216 (PSKEVGNEKTSINKEEVSGTPAAN) is disordered. Positions 197 to 209 (VGNEKTSINKEEV) are enriched in basic and acidic residues.

This sequence belongs to the WRB/GET1 family. As to quaternary structure, component of the Golgi to ER traffic (GET) complex, which is composed of GET1, GET2 and GET3. Within the complex, GET1 and GET2 form a heterotetramer which is stabilized by phosphatidylinositol binding and which binds to the GET3 homodimer.

The protein localises to the endoplasmic reticulum membrane. It is found in the golgi apparatus membrane. Functionally, required for the post-translational delivery of tail-anchored (TA) proteins to the endoplasmic reticulum. Together with GET2, acts as a membrane receptor for soluble GET3, which recognizes and selectively binds the transmembrane domain of TA proteins in the cytosol. The GET complex cooperates with the HDEL receptor ERD2 to mediate the ATP-dependent retrieval of resident ER proteins that contain a C-terminal H-D-E-L retention signal from the Golgi to the ER. This Debaryomyces hansenii (strain ATCC 36239 / CBS 767 / BCRC 21394 / JCM 1990 / NBRC 0083 / IGC 2968) (Yeast) protein is Golgi to ER traffic protein 1.